The sequence spans 66 residues: Large ribosomal subunit protein bL33c (66 aa).

The protein belongs to the bacterial ribosomal protein bL33 family.

It localises to the plastid. It is found in the chloroplast. The polypeptide is Large ribosomal subunit protein bL33c (Oryza nivara (Indian wild rice)).